The chain runs to 209 residues: Dephospho-CoA kinase (209 aa).

One can recognise a DPCK domain in the interval 13-209 (RIGLTGGIAT…AIEKVVVAEN (197 aa)). 21–26 (ATGKST) is an ATP binding site.

This sequence belongs to the CoaE family.

The protein resides in the cytoplasm. The catalysed reaction is 3'-dephospho-CoA + ATP = ADP + CoA + H(+). It functions in the pathway cofactor biosynthesis; coenzyme A biosynthesis; CoA from (R)-pantothenate: step 5/5. Functionally, catalyzes the phosphorylation of the 3'-hydroxyl group of dephosphocoenzyme A to form coenzyme A. The sequence is that of Dephospho-CoA kinase from Synechococcus elongatus (strain ATCC 33912 / PCC 7942 / FACHB-805) (Anacystis nidulans R2).